We begin with the raw amino-acid sequence, 696 residues long: Probable transporter efuK (696 aa).

A disordered region spans residues 603 to 642 (SLNGGKMQGASDAKSKVEQGQRAMRKQDEQNGSKWEPVFF). The span at 615–633 (AKSKVEQGQRAMRKQDEQN) shows a compositional bias: basic and acidic residues.

This sequence belongs to the OSBP family.

Its function is as follows. Probable transporter; part of the gene cluster that mediates the biosynthesis of enfumafungin, a glycosylated fernene-type triterpenoid with potent antifungal activity, mediated by its interaction with beta-1,3-glucan synthase and the fungal cell wall. Might be involved in transport of enfumafungin to and across organelle membranes. The polypeptide is Probable transporter efuK (Hormonema carpetanum).